The sequence spans 837 residues: MKVSLSWLNELVDIHCDVEELADSLSMAGFEVEELIDLSASLEGIVTGYVIDISPHPNADKLSVCKVDIGKSEAIQIVCGAKNIRSGIHVLVATEGTYLKDIDLTIKTSHLRGQISQGMICSLSELGLPPNNDGIAILEEMNIAIPKIGVCPKKQLGLDEIIFDLAITANRPDGLSMVGIAREVSAINNTKLKLPAIDLLHKDYKEFDHNVESKKFASRNEVYSLNLIDNLNGNNDSSEEVKSRLRNAGINSINAIVDLTNYTMLEQGQPLHAFDADLLCELTGKEVTINDFGIRKAKTGENLIGIDGIDYSLSSKVDVITCSNIIIAIAGIIGGKNSCVNKETRKIWLEAALFSPSSVRISSREIGKRTESSTRFEKGISPEITISSVERCLNLLTKTFDCQILEKWINRELVIEEQLLLLRREKINKTLGKVVEHKTNINAGDNSNNIDKSGESQINTLRNIDDHEIEQSLISLGCKLQKDVKGWLVEVPANRKLDLKREIDLIEEISRLIGYDRFDSNLPNPLRPGGLTPKQKIERKVRESLTSVGFQEVVTLSLVAKDQYSKNQVAISNPLLSETSHLRTNLWQEHLNICQRNMAYEQKGCWIYEIGKIYNIDSGRINETSLLCGALVGNKSIGQWQTETKNSSLDYFQSRGILHSALNSLNINITDEKLDENQLLHPGKSSMLKLEGKELGFFGELHPSKLSDLNIDYPIYIFELNFNLILQSSTRKNKLNISFKQFPTVPSMERDIALLVDNNIQSLDISNLIIKTGRPLVEDAYLIDRYEGDNIPKGKVSQAFRIRYRKNKDTLKEEEVSPIHDKIREKLKVEFSAELRS.

One can recognise a tRNA-binding domain in the interval 39-149 (SASLEGIVTG…EMNIAIPKIG (111 aa)). The B5 domain occupies 415–520 (IEEQLLLLRR…RLIGYDRFDS (106 aa)). The Mg(2+) site is built by aspartate 498, aspartate 504, glutamate 507, and glutamate 508. The 94-residue stretch at 743–836 (PTVPSMERDI…LKVEFSAELR (94 aa)) folds into the FDX-ACB domain.

Belongs to the phenylalanyl-tRNA synthetase beta subunit family. Type 1 subfamily. Tetramer of two alpha and two beta subunits. Mg(2+) serves as cofactor.

The protein localises to the cytoplasm. It catalyses the reaction tRNA(Phe) + L-phenylalanine + ATP = L-phenylalanyl-tRNA(Phe) + AMP + diphosphate + H(+). The protein is Phenylalanine--tRNA ligase beta subunit of Prochlorococcus marinus (strain SARG / CCMP1375 / SS120).